A 252-amino-acid chain; its full sequence is L-aspartate dehydrogenase (252 aa).

NAD(+)-binding residues include alanine 119 and asparagine 175. Histidine 203 is an active-site residue.

This sequence belongs to the L-aspartate dehydrogenase family.

It carries out the reaction L-aspartate + NADP(+) + H2O = oxaloacetate + NH4(+) + NADPH + H(+). The enzyme catalyses L-aspartate + NAD(+) + H2O = oxaloacetate + NH4(+) + NADH + H(+). It participates in cofactor biosynthesis; NAD(+) biosynthesis; iminoaspartate from L-aspartate (dehydrogenase route): step 1/1. Functionally, specifically catalyzes the NAD or NADP-dependent dehydrogenation of L-aspartate to iminoaspartate. The protein is L-aspartate dehydrogenase of Methanospirillum hungatei JF-1 (strain ATCC 27890 / DSM 864 / NBRC 100397 / JF-1).